Here is a 130-residue protein sequence, read N- to C-terminus: Small ribosomal subunit protein uS11 (130 aa).

The protein belongs to the universal ribosomal protein uS11 family. In terms of assembly, part of the 30S ribosomal subunit. Interacts with proteins S7 and S18. Binds to IF-3.

Its function is as follows. Located on the platform of the 30S subunit, it bridges several disparate RNA helices of the 16S rRNA. Forms part of the Shine-Dalgarno cleft in the 70S ribosome. This chain is Small ribosomal subunit protein uS11, found in Xylella fastidiosa (strain M12).